A 117-amino-acid chain; its full sequence is Large ribosomal subunit protein bL19 (117 aa).

This sequence belongs to the bacterial ribosomal protein bL19 family.

Functionally, this protein is located at the 30S-50S ribosomal subunit interface and may play a role in the structure and function of the aminoacyl-tRNA binding site. In Sorangium cellulosum (strain So ce56) (Polyangium cellulosum (strain So ce56)), this protein is Large ribosomal subunit protein bL19.